The sequence spans 2114 residues: Protein CELLULOSE SYNTHASE INTERACTIVE 2 (2114 aa).

ARM repeat units follow at residues 2–42, 46–87, 89–128, 135–177, 180–219, 222–262, 265–305, 354–394, 396–435, 479–519, 522–561, 563–595, 601–640, 643–682, 708–750, 774–816, 825–865, 870–910, 914–953, 994–1033, 1044–1083, 1087–1128, 1141–1182, 1185–1225, 1227–1264, 1265–1304, 1312–1353, 1355–1394, 1396–1435, 1454–1494, 1496–1525, 1526–1564, 1566–1605, 1606–1648, 1650–1689, 1690–1730, 1732–1771, 1772–1813, 1816–1855, 1857–1898, 1901–1940, and 1949–1993; these read TSEM…LLGL, KKEC…VLCK, KNVR…EVSL, NVGT…NLCG, DGFW…RLIR, TSSI…AITS, EEAI…SYGT, GDTR…SLFG, VDLS…NLCK, EESR…NLCC, EEIR…KLIK, ADPS…HVLA, EFVT…DLFS, KDLC…SLSN, AKTN…RVLR, SDVF…LLAK, HNPF…RFCK, LLGR…CAAK, TLWA…IQRP, PSNR…KWIA, PKVV…ALVR, DKTI…LVQN, ERVR…RIAD, DLSK…SLFR, PEIT…LCEL, FSSE…ALVK, RPDI…FLFT, EGLR…RLLD, KRFV…KMAK, ISQL…MVQP, LLIL…KPMV, LESL…SLLE, QRFQ…RSSV, TWPK…NILR, NPEH…ENQD, SSSV…RNPK, RETK…DISQ, HEGL…NFAM, RTSR…SLFS, HTLQ…TILT, PKLR…TLRQ, and TARS…CLPG. Residues 1974–2087 form the C2 domain; that stretch reads SPAPSSFHER…LSEGSYSGIF (114 aa).

In terms of assembly, associates with cellulase synthase (CESA) complexes. Binds to cortical microtubules.

It is found in the cell membrane. The protein resides in the cytoplasm. The protein localises to the cytoskeleton. Regulator of the microtubular cytoskeleton. Microtubule-associated protein involved in the association of cellulase synthase (CESA) complexes (CSCs) and cortical microtubules. Promotes dynamics of CSCs in the plasma membrane. Regulates primary cell wall biosynthesis and cellulose microfibrils organization. The sequence is that of Protein CELLULOSE SYNTHASE INTERACTIVE 2 from Arabidopsis thaliana (Mouse-ear cress).